Here is a 359-residue protein sequence, read N- to C-terminus: Membrane-bound lytic murein transglycosylase C (359 aa).

An N-terminal signal peptide occupies residues 1 to 16; the sequence is MKKYLALALIAPLLIS. Residue cysteine 17 is the site of N-palmitoyl cysteine attachment. Cysteine 17 carries S-diacylglycerol cysteine lipidation.

It belongs to the transglycosylase Slt family.

It is found in the cell outer membrane. It catalyses the reaction Exolytic cleavage of the (1-&gt;4)-beta-glycosidic linkage between N-acetylmuramic acid (MurNAc) and N-acetylglucosamine (GlcNAc) residues in peptidoglycan, from either the reducing or the non-reducing ends of the peptidoglycan chains, with concomitant formation of a 1,6-anhydrobond in the MurNAc residue.. Murein-degrading enzyme. May play a role in recycling of muropeptides during cell elongation and/or cell division. The chain is Membrane-bound lytic murein transglycosylase C from Escherichia coli O127:H6 (strain E2348/69 / EPEC).